The following is a 423-amino-acid chain: Transmembrane protease serine 11E (423 aa).

Residues 1–18 (MYRSCVVRARKRTCVEPW) lie on the Cytoplasmic side of the membrane. Residues 19 to 39 (VIGIISFLSLIVLAVCIGLTV) traverse the membrane as a helical; Signal-anchor for type II membrane protein segment. At 40–423 (HYVRYNHRRT…RHWIASNTGI (384 aa)) the chain is on the extracellular side. The SEA domain occupies 48 to 166 (RTYNYYSTLS…ESVKIKKINK (119 aa)). N-linked (GlcNAc...) asparagine glycans are attached at residues N74, N165, N182, and N223. Cystine bridges form between C176/C297, C217/C233, C342/C358, and C369/C398. The region spanning 192 to 422 (IVGGTPVEEE…FRHWIASNTG (231 aa)) is the Peptidase S1 domain. Catalysis depends on charge relay system residues H232 and D277. The active-site Charge relay system is S373.

This sequence belongs to the peptidase S1 family. In terms of assembly, forms a heterodimer with SERPINA5 and SERPINE1. N-glycosylated. As to expression, expressed in epidermal, oral and male reproductive tissues.

The protein resides in the cell membrane. It localises to the secreted. Its activity is regulated as follows. Inhibited by SERPINA5. In terms of biological role, serine protease which possesses both gelatinolytic and caseinolytic activities. Shows a preference for Arg in the P1 position. The polypeptide is Transmembrane protease serine 11E (Tmprss11e) (Mus musculus (Mouse)).